A 50-amino-acid polypeptide reads, in one-letter code: Large ribosomal subunit protein bL36B (50 aa).

Belongs to the bacterial ribosomal protein bL36 family.

The polypeptide is Large ribosomal subunit protein bL36B (Pseudomonas aeruginosa (strain UCBPP-PA14)).